The primary structure comprises 891 residues: DNA mismatch repair protein MutS (891 aa).

Position 639–646 (639–646 (GPNMAGKS)) interacts with ATP. A disordered region spans residues 827 to 854 (TIQEARPSAQGSEEKTPSSPAEKGLSLF).

The protein belongs to the DNA mismatch repair MutS family.

Functionally, this protein is involved in the repair of mismatches in DNA. It is possible that it carries out the mismatch recognition step. This protein has a weak ATPase activity. This chain is DNA mismatch repair protein MutS, found in Treponema denticola (strain ATCC 35405 / DSM 14222 / CIP 103919 / JCM 8153 / KCTC 15104).